The primary structure comprises 322 residues: Breast cancer metastasis-suppressor 1-like protein (322 aa).

The span at 1–16 (MPVHSREKKESNHNDM) shows a compositional bias: basic and acidic residues. Positions 1 to 56 (MPVHSREKKESNHNDMEVDYPENEGSSSEEDDSDSSSGSEEGDSSEMDDEDCERRR) are disordered. Positions 17–51 (EVDYPENEGSSSEEDDSDSSSGSEEGDSSEMDDED) are enriched in acidic residues. Coiled-coil stretches lie at residues 50-99 (EDCE…QAQE) and 147-178 (EKLL…ITSE).

It belongs to the BRMS1 family.

The protein resides in the nucleus. Its function is as follows. Involved in the histone deacetylase (HDAC1)-dependent transcriptional repression activity. The protein is Breast cancer metastasis-suppressor 1-like protein (brms1l) of Xenopus laevis (African clawed frog).